A 253-amino-acid polypeptide reads, in one-letter code: Imidazole glycerol phosphate synthase subunit HisF (253 aa).

Active-site residues include Asp11 and Asp130.

Belongs to the HisA/HisF family. Heterodimer of HisH and HisF.

The protein resides in the cytoplasm. The catalysed reaction is 5-[(5-phospho-1-deoxy-D-ribulos-1-ylimino)methylamino]-1-(5-phospho-beta-D-ribosyl)imidazole-4-carboxamide + L-glutamine = D-erythro-1-(imidazol-4-yl)glycerol 3-phosphate + 5-amino-1-(5-phospho-beta-D-ribosyl)imidazole-4-carboxamide + L-glutamate + H(+). It participates in amino-acid biosynthesis; L-histidine biosynthesis; L-histidine from 5-phospho-alpha-D-ribose 1-diphosphate: step 5/9. IGPS catalyzes the conversion of PRFAR and glutamine to IGP, AICAR and glutamate. The HisF subunit catalyzes the cyclization activity that produces IGP and AICAR from PRFAR using the ammonia provided by the HisH subunit. This Clostridium botulinum (strain Okra / Type B1) protein is Imidazole glycerol phosphate synthase subunit HisF.